Reading from the N-terminus, the 453-residue chain is Putative sodium-coupled neutral amino acid transporter 11 (453 aa).

Residues 1–34 (MSYQQPQLRGPLQRETDPSDRESLVSGHEHGGKS) form a disordered region. Residues 12–32 (LQRETDPSDRESLVSGHEHGG) are compositionally biased toward basic and acidic residues. Helical transmembrane passes span 39–59 (AVFN…PYSM), 66–86 (LGIL…VLLI), 106–126 (GFPG…IAMI), 152–172 (FISR…PLSL), 179–199 (LGKI…VVVT), 222–242 (AIQA…CFLV), 262–282 (ILVS…TFTG), 299–319 (VTFG…IECF), 337–357 (VFHV…SLLI), 359–379 (CLGI…IFII), and 399–419 (MACV…VMAI).

Belongs to the amino acid/polyamine transporter 2 family. As to expression, widely expressed.

It is found in the membrane. Putative sodium-dependent amino acid/proton antiporter. The protein is Putative sodium-coupled neutral amino acid transporter 11 (Slc38a11) of Rattus norvegicus (Rat).